The following is a 310-amino-acid chain: Homoserine kinase (310 aa).

ATP is bound at residue 85-95 (PKGLGLGSSGA).

This sequence belongs to the GHMP kinase family. Homoserine kinase subfamily.

The protein resides in the cytoplasm. It carries out the reaction L-homoserine + ATP = O-phospho-L-homoserine + ADP + H(+). It functions in the pathway amino-acid biosynthesis; L-threonine biosynthesis; L-threonine from L-aspartate: step 4/5. Its function is as follows. Catalyzes the ATP-dependent phosphorylation of L-homoserine to L-homoserine phosphate. The chain is Homoserine kinase from Thermoplasma acidophilum (strain ATCC 25905 / DSM 1728 / JCM 9062 / NBRC 15155 / AMRC-C165).